Here is a 448-residue protein sequence, read N- to C-terminus: Probable glycine dehydrogenase (decarboxylating) subunit 1 (448 aa).

It belongs to the GcvP family. N-terminal subunit subfamily. The glycine cleavage system is composed of four proteins: P, T, L and H. In this organism, the P 'protein' is a heterodimer of two subunits.

The enzyme catalyses N(6)-[(R)-lipoyl]-L-lysyl-[glycine-cleavage complex H protein] + glycine + H(+) = N(6)-[(R)-S(8)-aminomethyldihydrolipoyl]-L-lysyl-[glycine-cleavage complex H protein] + CO2. The glycine cleavage system catalyzes the degradation of glycine. The P protein binds the alpha-amino group of glycine through its pyridoxal phosphate cofactor; CO(2) is released and the remaining methylamine moiety is then transferred to the lipoamide cofactor of the H protein. This chain is Probable glycine dehydrogenase (decarboxylating) subunit 1, found in Rhodospirillum rubrum (strain ATCC 11170 / ATH 1.1.1 / DSM 467 / LMG 4362 / NCIMB 8255 / S1).